We begin with the raw amino-acid sequence, 312 residues long: Ribosomal RNA small subunit methyltransferase H (312 aa).

S-adenosyl-L-methionine-binding positions include 33–35 (AGH), Asp-53, Phe-79, Asp-100, and Gln-107.

Belongs to the methyltransferase superfamily. RsmH family.

The protein localises to the cytoplasm. It carries out the reaction cytidine(1402) in 16S rRNA + S-adenosyl-L-methionine = N(4)-methylcytidine(1402) in 16S rRNA + S-adenosyl-L-homocysteine + H(+). In terms of biological role, specifically methylates the N4 position of cytidine in position 1402 (C1402) of 16S rRNA. The chain is Ribosomal RNA small subunit methyltransferase H from Clostridium acetobutylicum (strain ATCC 824 / DSM 792 / JCM 1419 / IAM 19013 / LMG 5710 / NBRC 13948 / NRRL B-527 / VKM B-1787 / 2291 / W).